Reading from the N-terminus, the 235-residue chain is Probable transcriptional regulatory protein CJJ81176_1187 (235 aa).

This sequence belongs to the TACO1 family.

It is found in the cytoplasm. The chain is Probable transcriptional regulatory protein CJJ81176_1187 from Campylobacter jejuni subsp. jejuni serotype O:23/36 (strain 81-176).